A 538-amino-acid chain; its full sequence is MLADSYLIKFVLRQLQVQQDGDAQHLLMVFLGLLALVTLLQWLVRNYRELRKLPPGPWGLPVIGYLLFMGSEKHTRFMELAKQYGSLFSTRLGSQLTVVMSDYKMIRECFRREEFTGRPDTPFMQTLNGYGIINSTGKLWKDQRRFLHDKLRQFGMTYMGNGKQQMQKRIMTEVHEFIGHLHASDGQPVDMSPVISVAVSNVICSLMMSTRFSIDDPKFRRFNFLIEEGMRLFGEIHTVDYIPTMQCFPSISTAKNKIAQNRAEMQRFYQDVIDDHKRSFDPNNIRDLVDFYLCEIEKAKAEGTDAELFDGKNHEEQLVQVIIDLFSAGMETIKTTLLWINVFMLRNPKEMRRVQDELDQVVGRHRLPTIEDLQYLPITESTILESMRRSSIVPLATTHSPTRDVELNGYTIPAGSHVIPLINSVHMDPNLWEKPEEFRPSRFIDTEGKVRKPEYFIPFGVGRRMCLGDVLARMELFLFFASFMHCFDIALPEGQPLPSLKGNVGATITPESFKVCLKRRPLGPTAADPHHMRNVGAN.

Residues 24–44 (QHLLMVFLGLLALVTLLQWLV) traverse the membrane as a helical segment. Residue Cys-466 participates in heme binding.

This sequence belongs to the cytochrome P450 family. The cofactor is heme. In terms of tissue distribution, expressed in body wall (epidermal and muscle cells) and mid- and hind-gut.

The protein resides in the endoplasmic reticulum membrane. Its subcellular location is the microsome membrane. In terms of biological role, probably involved in steroid hormones biosynthesis. The protein is Cytochrome P450 18a1 (Cyp18a1) of Drosophila melanogaster (Fruit fly).